A 101-amino-acid chain; its full sequence is Small ribosomal subunit protein uS17 (101 aa).

The protein belongs to the universal ribosomal protein uS17 family. Part of the 30S ribosomal subunit.

Functionally, one of the primary rRNA binding proteins, it binds specifically to the 5'-end of 16S ribosomal RNA. In Kosmotoga olearia (strain ATCC BAA-1733 / DSM 21960 / TBF 19.5.1), this protein is Small ribosomal subunit protein uS17.